Consider the following 1894-residue polypeptide: Adenylate kinase 9 (1894 aa).

Residues 32–286 (TCFIIFGKPG…LFMTVIERLK (255 aa)) form an adenylate kinase 1 region. 41 to 46 (GAGKTT) is an ATP binding site. Residues 61 to 90 (EALSVLEEHIAAEKETGAMLQSLLVSGHSI) are NMP 1. 117-120 (EMPS) contacts AMP. The tract at residues 161 to 206 (GQRQHSTTGYVYTREQWDPEIIESRRRKKRDFPKEGKSEEEEEEEE) is LID 1. The interval 188–211 (KKRDFPKEGKSEEEEEEEEQEEEE) is disordered. Residues 198–211 (SEEEEEEEEQEEEE) are compositionally biased toward acidic residues. An AMP-binding site is contributed by Arg230. Positions 451 to 478 (IKVVQQRLLNEKQAKQQEERTLKELQVQ) form a coiled coil. The disordered stretch occupies residues 492-533 (SEELPSLENTGSKLSSLEIGQEDKSKSETTITGDQVKDVSTE). Positions 651-691 (LERLQEEAQAKKREEEEIRKVKEEELRLEEEKQRLMELATK) form a coiled coil. 2 disordered regions span residues 710-789 (PYPD…LGSE) and 876-911 (EEEAEDYQAETEIDEEQEEEEEEEEEGEEKIKEKRR). Residues 715 to 736 (PDNEAEEEVEDSEIHEESEAQE) are compositionally biased toward acidic residues. 2 stretches are compositionally biased toward basic and acidic residues: residues 757–768 (EGDHEPEAEFKP) and 777–789 (ETEKDPKEGLGSE). Residues 876-903 (EEEAEDYQAETEIDEEQEEEEEEEEEGE) show a composition bias toward acidic residues. The adenylate kinase 2 stretch occupies residues 976–1187 (LRICLLGPHG…VAKRRAELIL (212 aa)). 985–990 (GSGKTV) provides a ligand contact to ATP. The interval 1005–1036 (QFDEFLQEKMLLKAERKFGPEFEDDSEEEQLV) is NMP 2. AMP is bound by residues 1034-1036 (QLV) and 1063-1066 (VQLT). Residues 1108 to 1128 (DGFPRHPEEAQFLGERGFFPD) form an LID 2 region. Acidic residues predominate over residues 1223–1241 (EFPKDEEEMSEEDEEQEAD). A disordered region spans residues 1223 to 1243 (EFPKDEEEMSEEDEEQEADAT). Residues 1395-1584 (VRIMIVGPPK…VWNEVLKDIQ (190 aa)) form an adenylate kinase 3 region. 1404–1409 (KSGKTT) lines the ATP pocket. The tract at residues 1424–1455 (SVGDALRGMLNNHPDSELSLMLNWHLHKGKTV) is NMP 3. Residues Arg1430, 1482–1485 (GYPV), and Gln1489 each bind AMP. The segment at 1519 to 1533 (LEKKTEQSMSYPLHN) is LID 3.

It belongs to the adenylate kinase family. In terms of tissue distribution, highly expressed in the testis.

The protein resides in the cytoplasm. The protein localises to the nucleus. It is found in the cell projection. Its subcellular location is the cilium. It localises to the flagellum. It carries out the reaction a ribonucleoside 5'-phosphate + ATP = a ribonucleoside 5'-diphosphate + ADP. The catalysed reaction is AMP + ATP = 2 ADP. It catalyses the reaction GTP + AMP = GDP + ADP. The enzyme catalyses CMP + ATP = CDP + ADP. It carries out the reaction GTP + CMP = CDP + GDP. The catalysed reaction is dAMP + ATP = dADP + ADP. It catalyses the reaction dCMP + ATP = dCDP + ADP. The enzyme catalyses a ribonucleoside 5'-diphosphate + ATP = a ribonucleoside 5'-triphosphate + ADP. It carries out the reaction CDP + ATP = CTP + ADP. The catalysed reaction is CDP + GTP = CTP + GDP. It catalyses the reaction GDP + ATP = GTP + ADP. The enzyme catalyses UDP + ATP = UTP + ADP. It carries out the reaction GTP + UDP = UTP + GDP. The catalysed reaction is dTDP + GTP = dTTP + GDP. It catalyses the reaction dCDP + ATP = dCTP + ADP. The enzyme catalyses dCDP + GTP = dCTP + GDP. It carries out the reaction dGDP + ATP = dGTP + ADP. The catalysed reaction is dTDP + ATP = dTTP + ADP. It catalyses the reaction dADP + GTP = dATP + GDP. Its function is as follows. Broad-specificity nucleoside phosphate kinase involved in cellular nucleotide homeostasis by catalyzing nucleoside-phosphate interconversions. Similar to other adenylate kinases, preferentially catalyzes the phosphorylation of the nucleoside monophosphate AMP with ATP as phosphate donor to produce ADP. In vitro, can also catalyze the phosphorylation of CMP, dAMP and dCMP and use GTP as an alternate phosphate donor. Moreover, exhibits a diphosphate kinase activity, producing ATP, CTP, GTP, UTP, TTP, dATP, dCTP and dGTP from the corresponding diphosphate substrates with either ATP or GTP as phosphate donors. For this activity shows the following substrate preference CDP &gt; UDP &gt; ADP &gt; TDP. The protein is Adenylate kinase 9 of Mus musculus (Mouse).